We begin with the raw amino-acid sequence, 513 residues long: Ribonuclease Y (513 aa).

A helical transmembrane segment spans residues 6–26; the sequence is YIIIAVVIIIICVILGLYVVD. Residues 203–288 form the KH domain; sequence TVHVVNLPND…EMVEKAKKEV (86 aa). The HD domain occupies 329–422; the sequence is VLKHSIEVSH…VQAADAISAA (94 aa).

Belongs to the RNase Y family.

Its subcellular location is the cell membrane. Endoribonuclease that initiates mRNA decay. This chain is Ribonuclease Y, found in Clostridium botulinum (strain Loch Maree / Type A3).